The primary structure comprises 294 residues: Sarcotoxin II-2 (294 aa).

The N-terminal stretch at 1-22 is a signal peptide; the sequence is MKSFVFFAACFAIVALNSLAHA. Residues 23–24 constitute a propeptide, removed by a dipeptidylpeptidase; the sequence is YP. At glutamine 25 the chain carries Pyrrolidone carboxylic acid. The residue at position 293 (arginine 293) is an Arginine amide.

The protein belongs to the attacin/sarcotoxin-2 family. In terms of tissue distribution, synthesized by the fat body and is eventually secreted into the hemolymph.

It localises to the secreted. Its function is as follows. Sarcotoxin II is an antibacterial protein which plays a role in the inflammatory response of this insect. The main effect of sarcotoxin II on E.coli may be the inhibition of cell wall synthesis, including septum formation. The chain is Sarcotoxin II-2 from Sarcophaga peregrina (Flesh fly).